The following is a 201-amino-acid chain: Holliday junction branch migration complex subunit RuvA (201 aa).

The segment at 1–64 (MYEYIRGQFQ…EDFIGLYGFT (64 aa)) is domain I. Residues 65–143 (TKEELEMFKL…PDELTSEEEQ (79 aa)) form a domain II region. The flexible linker stretch occupies residues 144–152 (LIEGINDNS). Residues 153–201 (DYSFNINETLSALMALGYTEKEAQKALEKVDKTLSIENMIKESLKLLMR) form a domain III region.

The protein belongs to the RuvA family. In terms of assembly, homotetramer. Forms an RuvA(8)-RuvB(12)-Holliday junction (HJ) complex. HJ DNA is sandwiched between 2 RuvA tetramers; dsDNA enters through RuvA and exits via RuvB. An RuvB hexamer assembles on each DNA strand where it exits the tetramer. Each RuvB hexamer is contacted by two RuvA subunits (via domain III) on 2 adjacent RuvB subunits; this complex drives branch migration. In the full resolvosome a probable DNA-RuvA(4)-RuvB(12)-RuvC(2) complex forms which resolves the HJ.

Its subcellular location is the cytoplasm. Its function is as follows. The RuvA-RuvB-RuvC complex processes Holliday junction (HJ) DNA during genetic recombination and DNA repair, while the RuvA-RuvB complex plays an important role in the rescue of blocked DNA replication forks via replication fork reversal (RFR). RuvA specifically binds to HJ cruciform DNA, conferring on it an open structure. The RuvB hexamer acts as an ATP-dependent pump, pulling dsDNA into and through the RuvAB complex. HJ branch migration allows RuvC to scan DNA until it finds its consensus sequence, where it cleaves and resolves the cruciform DNA. The polypeptide is Holliday junction branch migration complex subunit RuvA (Clostridium perfringens (strain SM101 / Type A)).